Consider the following 114-residue polypeptide: Fumarate reductase subunit D (114 aa).

A run of 3 helical transmembrane segments spans residues I27–M47, I50–P70, and W94–L114.

This sequence belongs to the FrdD family. In terms of assembly, part of an enzyme complex containing four subunits: a flavoprotein (FrdA), an iron-sulfur protein (FrdB), and two hydrophobic anchor proteins (FrdC and FrdD).

It is found in the cell inner membrane. Its function is as follows. Anchors the catalytic components of the fumarate reductase complex to the cell membrane, binds quinones. The sequence is that of Fumarate reductase subunit D from Haemophilus ducreyi (strain 35000HP / ATCC 700724).